The following is a 137-amino-acid chain: Protein BNS1 (137 aa).

In terms of biological role, component of the FEAR (CDC14 early anaphase release) network which promotes CDC14 release from the nucleolus during early anaphase and is required for the efficient segregation of telomeric and nucleolar regions. Although BNS1 can partially compensate for a lack of SPO12 function when overexpressed, it does not appear to play any role in controlling meiotic nuclear division. The chain is Protein BNS1 (BNS1) from Saccharomyces cerevisiae (strain ATCC 204508 / S288c) (Baker's yeast).